The primary structure comprises 1481 residues: ABC-type transporter braE (1481 aa).

Transmembrane regions (helical) follow at residues 27–47 (FTVKFEQLCFSLTPAAIFILA), 86–106 (LILITVLPFGASGIDIISSAL), 130–150 (IFLSAYLFFTLLFDIAQARTY), 159–179 (EIAFTAIFTAALAMKIAMLLL), 269–289 (LYVPMILPIPAKLAAIGSFFC), and 308–328 (PANIGYGFIGASICIYSVIAI). An ABC transmembrane type-1 1 domain is found at 281 to 549 (LAAIGSFFCQ…LLETLPQMAA (269 aa)). N-linked (GlcNAc...) asparagine glycosylation is present at Asn367. 3 helical membrane passes run 389–409 (ELWGNVIEVALSAWLLYNLLG), 410–430 (VAFIAPIVVVCICVGGVSFFM), and 491–511 (LMLTCSVFAYIPLLLSPPITF). The ABC transporter 1 domain occupies 594-823 (VAIKDGSFGW…QSYIHSLGVK (230 aa)). 627-634 (GPIASGKS) contacts ATP. N-linked (GlcNAc...) asparagine glycosylation is found at Asn671 and Asn813. 6 consecutive transmembrane segments (helical) span residues 887 to 907 (IAIFTSGLLYGFFYNFPTIWL), 928 to 948 (AIYAVLEVCAMLSLIWLGVLL), 1001 to 1021 (SALLNVIYMVFVGIGQAAVIA), 1026 to 1046 (YLAISYPFLFGMLYVVQKFYL), 1111 to 1131 (LHFVLNVVVAIIAVMLTSLAV), and 1144 to 1164 (LVTLMSFGEMLSGVVIYYTAL). Residues 887-1166 (IAIFTSGLLY…VVIYYTALET (280 aa)) enclose the ABC transmembrane type-1 2 domain. Residues Asn1207 and Asn1232 are each glycosylated (N-linked (GlcNAc...) asparagine). The ABC transporter 2 domain occupies 1224 to 1477 (LTTNELSSND…PGTRFGELWS (254 aa)). 1260 to 1267 (GRTGSGKS) contacts ATP. 2 N-linked (GlcNAc...) asparagine glycosylation sites follow: Asn1330 and Asn1364.

The protein belongs to the ABC transporter superfamily. ABCC family. Conjugate transporter (TC 3.A.1.208) subfamily.

It is found in the membrane. In terms of biological role, ABC-type transporter; part of the gene cluster that mediates the biosynthesis of the brasilane terpene glycosides brasilane D and E. The polypeptide is ABC-type transporter braE (Annulohypoxylon truncatum (Hypoxylon truncatum)).